The sequence spans 118 residues: UPF0102 protein NE0719 (118 aa).

This sequence belongs to the UPF0102 family.

In Nitrosomonas europaea (strain ATCC 19718 / CIP 103999 / KCTC 2705 / NBRC 14298), this protein is UPF0102 protein NE0719.